Reading from the N-terminus, the 29-residue chain is GLPVCGETCVTGSCYTPGCTCSWPVCTRN.

Positions 1 to 29 (GLPVCGETCVTGSCYTPGCTCSWPVCTRN) form a cross-link, cyclopeptide (Gly-Asn). Intrachain disulfides connect Cys5/Cys19, Cys9/Cys21, and Cys14/Cys26.

This is a cyclic peptide. As to expression, expressed in leaves, petals, petioles, and runners but not in roots (at protein level).

In terms of biological role, probably participates in a plant defense mechanism. In Viola odorata (Sweet violet), this protein is Cycloviolacin-O21.